The following is a 421-amino-acid chain: Tyrosine--tRNA ligase (421 aa).

Tyr-42 contacts L-tyrosine. A 'HIGH' region motif is present at residues 47 to 56 (CTAPSLHVGS). Positions 179 and 183 each coordinate L-tyrosine. The 'KMSKS' region motif lies at 239 to 243 (KMGKT). Residue Lys-242 participates in ATP binding. Residues 354–419 (LGILAAFAKA…RKKHVLLRLA (66 aa)) enclose the S4 RNA-binding domain.

Belongs to the class-I aminoacyl-tRNA synthetase family. TyrS type 1 subfamily. In terms of assembly, homodimer.

It localises to the cytoplasm. It catalyses the reaction tRNA(Tyr) + L-tyrosine + ATP = L-tyrosyl-tRNA(Tyr) + AMP + diphosphate + H(+). In terms of biological role, catalyzes the attachment of tyrosine to tRNA(Tyr) in a two-step reaction: tyrosine is first activated by ATP to form Tyr-AMP and then transferred to the acceptor end of tRNA(Tyr). This is Tyrosine--tRNA ligase from Beijerinckia indica subsp. indica (strain ATCC 9039 / DSM 1715 / NCIMB 8712).